The primary structure comprises 594 residues: Probable translation initiation factor IF-2 (594 aa).

One can recognise a tr-type G domain in the interval 11-226 (LRTPIVCVMG…LIGLAQRFLE (216 aa)). A G1 region spans residues 20-27 (GHVDHGKT). GTP is bound at residue 20–27 (GHVDHGKT). The tract at residues 45 to 49 (AITQH) is G2. The interval 81–84 (DTPG) is G3. Residues 81 to 85 (DTPGH) and 135 to 138 (NKID) contribute to the GTP site. The G4 stretch occupies residues 135–138 (NKID). The segment at 203–205 (SAR) is G5.

The protein belongs to the TRAFAC class translation factor GTPase superfamily. Classic translation factor GTPase family. IF-2 subfamily.

Functionally, function in general translation initiation by promoting the binding of the formylmethionine-tRNA to ribosomes. Seems to function along with eIF-2. The sequence is that of Probable translation initiation factor IF-2 from Methanocella arvoryzae (strain DSM 22066 / NBRC 105507 / MRE50).